Here is a 191-residue protein sequence, read N- to C-terminus: Probable protein adenylyltransferase HI_0977 (191 aa).

Residues 37 to 162 (GSTKGLQQIH…NDLEIRFLLQ (126 aa)) form the Fido domain. ATP contacts are provided by residues 67–68 (KG), 112–114 (GNG), Arg-118, and Gln-145.

It belongs to the fic family.

It catalyses the reaction L-tyrosyl-[protein] + ATP = O-(5'-adenylyl)-L-tyrosyl-[protein] + diphosphate. It carries out the reaction L-threonyl-[protein] + ATP = 3-O-(5'-adenylyl)-L-threonyl-[protein] + diphosphate. In terms of biological role, probable adenylyltransferase that mediates the addition of adenosine 5'-monophosphate (AMP) to specific residues of target proteins. This chain is Probable protein adenylyltransferase HI_0977, found in Haemophilus influenzae (strain ATCC 51907 / DSM 11121 / KW20 / Rd).